The primary structure comprises 494 residues: Lysine--tRNA ligase (494 aa).

Mg(2+)-binding residues include Glu-407 and Glu-414.

The protein belongs to the class-II aminoacyl-tRNA synthetase family. In terms of assembly, homodimer. The cofactor is Mg(2+).

It localises to the cytoplasm. The catalysed reaction is tRNA(Lys) + L-lysine + ATP = L-lysyl-tRNA(Lys) + AMP + diphosphate. The protein is Lysine--tRNA ligase of Lactococcus lactis subsp. cremoris (strain SK11).